Reading from the N-terminus, the 178-residue chain is Protein SPEAR1 (178 aa).

2 disordered regions span residues 1-48 (MGST…QRGL) and 139-178 (HFLNEDPSSTTRRSKSLGSGIQHSGSSENQEVDLELRLSL). Over residues 14–28 (SSPPSSSPTSSSSSP) the composition is skewed to low complexity. The short motif at 46-54 (RGLGVAQLE) is the SPL element. The span at 144–167 (DPSSTTRRSKSLGSGIQHSGSSEN) shows a compositional bias: polar residues. The short motif at 170-176 (VDLELRL) is the EAR element.

As to quaternary structure, interacts with SPL and SPEAR2. In terms of tissue distribution, not detected in leaves.

Its function is as follows. Adapter-like transcriptional repressor recruiting TPL/TPR corepressors to inhibit TCP transcription factors. This chain is Protein SPEAR1, found in Arabidopsis thaliana (Mouse-ear cress).